A 246-amino-acid polypeptide reads, in one-letter code: UDP-N-acetyl-D-mannosaminuronic acid transferase (246 aa).

Belongs to the glycosyltransferase 26 family.

The enzyme catalyses UDP-N-acetyl-alpha-D-mannosaminouronate + N-acetyl-alpha-D-glucosaminyl-di-trans,octa-cis-undecaprenyl diphosphate = beta-D-ManNAcA-(1-&gt;4)-alpha-D-GlcNAc-di-trans,octa-cis-undecaprenyl diphosphate + UDP + H(+). Its pathway is bacterial outer membrane biogenesis; enterobacterial common antigen biosynthesis. Functionally, catalyzes the synthesis of Und-PP-GlcNAc-ManNAcA (Lipid II), the second lipid-linked intermediate involved in enterobacterial common antigen (ECA) synthesis. This Escherichia coli O6:K15:H31 (strain 536 / UPEC) protein is UDP-N-acetyl-D-mannosaminuronic acid transferase.